The primary structure comprises 520 residues: Protein-export membrane protein SecD (520 aa).

A run of 6 helical transmembrane segments spans residues 10-30 (IILL…PTLA), 364-384 (DSLL…FLRY), 391-411 (LPMI…AAGI), 417-437 (LSVI…LVII), 461-481 (FWVI…LAIL), and 483-503 (LGDL…GVLI).

The protein belongs to the SecD/SecF family. SecD subfamily. As to quaternary structure, part of the protein translocation apparatus. Forms a complex with SecF.

It localises to the cell membrane. In terms of biological role, involved in protein export. The sequence is that of Protein-export membrane protein SecD from Haloquadratum walsbyi (strain DSM 16790 / HBSQ001).